The chain runs to 267 residues: Probable proteasome subunit beta type-2 (267 aa).

A propeptide spans 1–35 (MMGINERKGFDFEYYQRNLLLQEKGFPTPKATSTG) (removed in mature form). Thr-36 functions as the Nucleophile in the catalytic mechanism.

It belongs to the peptidase T1B family. In terms of assembly, the 26S proteasome consists of a 20S proteasome core and two 19S regulatory subunits. The 20S proteasome core is composed of 28 subunits that are arranged in four stacked rings, resulting in a barrel-shaped structure. The two end rings are each formed by seven alpha subunits, and the two central rings are each formed by seven beta subunits. The catalytic chamber with the active sites is on the inside of the barrel.

The protein resides in the cytoplasm. It localises to the nucleus. The enzyme catalyses Cleavage of peptide bonds with very broad specificity.. Functionally, the proteasome is a multicatalytic proteinase complex which is characterized by its ability to cleave peptides with Arg, Phe, Tyr, Leu, and Glu adjacent to the leaving group at neutral or slightly basic pH. The proteasome has an ATP-dependent proteolytic activity (Potential). The polypeptide is Probable proteasome subunit beta type-2 (pup1) (Schizosaccharomyces pombe (strain 972 / ATCC 24843) (Fission yeast)).